The chain runs to 318 residues: BES1/BZR1 homolog protein 2 (318 aa).

Gly residues predominate over residues 1–13 (MAAGGGGGGGGSS). Disordered regions lie at residues 1 to 34 (MAAG…RRRR), 84 to 133 (FKPP…PSPS), 166 to 195 (NSAP…PNGG), and 209 to 231 (APSS…CDES). Positions 16 to 97 (RTPTWKEREN…ASDISGTPTN (82 aa)) are required for DNA-binding. Positions 91–101 (ISGTPTNFSTN) are enriched in polar residues. The segment covering 102-133 (SSIQPSPQSSAFPSPAPSYHGSPVSSSFPSPS) has biased composition (low complexity).

It belongs to the BZR/LAT61 family. Post-translationally, phosphorylated. Phosphorylation increases protein degradation.

The protein is BES1/BZR1 homolog protein 2 (BEH2) of Arabidopsis thaliana (Mouse-ear cress).